A 683-amino-acid polypeptide reads, in one-letter code: U4/U6 small nuclear ribonucleoprotein Prp3 (683 aa).

A PWI domain is found at 1–87; sequence MALSKRELDE…HSKSSSDRSR (87 aa). Basic and acidic residues predominate over residues 73 to 107; the sequence is GRSSRHSKSSSDRSRKRELKEVFGDDSEISKESSG. Residues 73 to 135 form a disordered region; the sequence is GRSSRHSKSS…IPGPPSESPG (63 aa). Lys139 is covalently cross-linked (Glycyl lysine isopeptide (Lys-Gly) (interchain with G-Cter in SUMO2)). A disordered region spans residues 161–183; sequence SFISPPAPQPKTPSSSQPERLPI. Ser164 is modified (phosphoserine). Glycyl lysine isopeptide (Lys-Gly) (interchain with G-Cter in SUMO2) cross-links involve residues Lys244 and Lys252. The segment at 416 to 550 is mediates interaction with SART3; it reads NLVEHPAQLN…VHISVYRVRN (135 aa). Ser619 is modified (phosphoserine).

In terms of assembly, component of the precatalytic spliceosome (spliceosome B complex). Component of the U4/U6-U5 tri-snRNP complex, a building block of the precatalytic spliceosome (spliceosome B complex). The U4/U6-U5 tri-snRNP complex is composed of the U4, U6 and U5 snRNAs and at least PRPF3, PRPF4, PRPF6, PRPF8, PRPF31, SNRNP200, TXNL4A, SNRNP40, SNRPB, SNRPD1, SNRPD2, SNRPD3, SNRPE, SNRPF, SNRPG, DDX23, CD2BP2, PPIH, SNU13, EFTUD2, SART1 and USP39, plus LSM2, LSM3, LSM4, LSM5, LSM6, LSM7 and LSM8. Interacts directly with PRPF4. Part of a heteromeric complex containing PPIH, PRPF3 and PRPF4 that is stable in the absence of RNA. Interacts with SART3; the interaction is direct and recruits the deubiquitinase USP4 to PRPF3. Interacts with PRPF19. Interacts ('Lys-63'-linked polyubiquitinated) with PRPF8 (via the MPN (JAB/Mov34) domain); may stabilize the U4/U6-U5 tri-snRNP complex. Interacts with ERCC6. In terms of processing, ubiquitinated. Undergoes 'Lys-63'-linked polyubiquitination by PRPF19 and deubiquitination by USP4. 'Lys-63'-linked ubiquitination increases the affinity for PRPF8 and may regulate the assembly of the U4/U6-U5 tri-snRNP complex.

The protein resides in the nucleus. The protein localises to the nucleus speckle. Plays a role in pre-mRNA splicing as component of the U4/U6-U5 tri-snRNP complex that is involved in spliceosome assembly, and as component of the precatalytic spliceosome (spliceosome B complex). In Mus musculus (Mouse), this protein is U4/U6 small nuclear ribonucleoprotein Prp3 (Prpf3).